An 874-amino-acid polypeptide reads, in one-letter code: Alanine--tRNA ligase (874 aa).

Histidine 562, histidine 566, cysteine 665, and histidine 669 together coordinate Zn(2+).

This sequence belongs to the class-II aminoacyl-tRNA synthetase family. Zn(2+) is required as a cofactor.

The protein resides in the cytoplasm. The catalysed reaction is tRNA(Ala) + L-alanine + ATP = L-alanyl-tRNA(Ala) + AMP + diphosphate. Catalyzes the attachment of alanine to tRNA(Ala) in a two-step reaction: alanine is first activated by ATP to form Ala-AMP and then transferred to the acceptor end of tRNA(Ala). Also edits incorrectly charged Ser-tRNA(Ala) and Gly-tRNA(Ala) via its editing domain. This Pseudomonas paraeruginosa (strain DSM 24068 / PA7) (Pseudomonas aeruginosa (strain PA7)) protein is Alanine--tRNA ligase.